The chain runs to 404 residues: Tryptophan synthase beta chain (404 aa).

An N6-(pyridoxal phosphate)lysine modification is found at lysine 94.

It belongs to the TrpB family. As to quaternary structure, tetramer of two alpha and two beta chains. Pyridoxal 5'-phosphate serves as cofactor.

It catalyses the reaction (1S,2R)-1-C-(indol-3-yl)glycerol 3-phosphate + L-serine = D-glyceraldehyde 3-phosphate + L-tryptophan + H2O. Its pathway is amino-acid biosynthesis; L-tryptophan biosynthesis; L-tryptophan from chorismate: step 5/5. Functionally, the beta subunit is responsible for the synthesis of L-tryptophan from indole and L-serine. The polypeptide is Tryptophan synthase beta chain (Staphylococcus aureus (strain bovine RF122 / ET3-1)).